The primary structure comprises 582 residues: uncharacterized protein (582 aa).

A run of 6 helical transmembrane segments spans residues V17 to V37, L57 to Y77, M131 to I151, A156 to I176, A239 to F259, and V271 to A291. The ABC transmembrane type-1 domain maps to V17–R300. Residues V335 to S571 enclose the ABC transporter domain. G369–S376 provides a ligand contact to ATP.

It belongs to the ABC transporter superfamily.

It localises to the cell membrane. This is an uncharacterized protein from Mycobacterium tuberculosis (strain CDC 1551 / Oshkosh).